The primary structure comprises 164 residues: Phosphopantetheine adenylyltransferase (164 aa).

Position 9 (serine 9) interacts with substrate. Residues 9–10 (SF) and histidine 17 each bind ATP. Residues lysine 41, leucine 73, and arginine 87 each contribute to the substrate site. Residues glutamate 98 and 122 to 128 (YSFLSSS) contribute to the ATP site.

This sequence belongs to the bacterial CoaD family. As to quaternary structure, homohexamer. Mg(2+) serves as cofactor.

The protein localises to the cytoplasm. It carries out the reaction (R)-4'-phosphopantetheine + ATP + H(+) = 3'-dephospho-CoA + diphosphate. It participates in cofactor biosynthesis; coenzyme A biosynthesis; CoA from (R)-pantothenate: step 4/5. Its function is as follows. Reversibly transfers an adenylyl group from ATP to 4'-phosphopantetheine, yielding dephospho-CoA (dPCoA) and pyrophosphate. The chain is Phosphopantetheine adenylyltransferase from Thermobifida fusca (strain YX).